The chain runs to 498 residues: Glycylpeptide N-tetradecanoyltransferase 2 (498 aa).

The disordered stretch occupies residues 1–87 (MAEDSESAAS…QPPSKNSTIP (87 aa)). Residues 15 to 32 (ELDDQDTCGIDGDNEEET) show a composition bias toward acidic residues. Ser-38 carries the phosphoserine modification. The span at 46-57 (KKKKKKQKRKKE) shows a compositional bias: basic residues. Over residues 61–72 (SGGTKSDSASDS) the composition is skewed to polar residues. 8 residues coordinate tetradecanoyl-CoA: His-117, Trp-122, Leu-250, Val-252, Ser-258, Arg-260, Val-261, and Ala-262.

It belongs to the NMT family.

The protein resides in the cytoplasm. Its subcellular location is the membrane. It catalyses the reaction N-terminal glycyl-[protein] + tetradecanoyl-CoA = N-tetradecanoylglycyl-[protein] + CoA + H(+). The catalysed reaction is N-terminal glycyl-L-lysyl-[protein] + tetradecanoyl-CoA = N-terminal glycyl-(N(6)-tetradecanoyl)-L-lysyl-[protein] + CoA + H(+). Adds a myristoyl group to the N-terminal glycine residue of certain cellular and viral proteins. Also able to mediate N-terminal lysine myristoylation of proteins: catalyzes myristoylation of ARF6 on both 'Gly-2' and 'Lys-3'. Lysine myristoylation is required to maintain ARF6 on membranes during the GTPase cycle. This is Glycylpeptide N-tetradecanoyltransferase 2 (NMT2) from Bos taurus (Bovine).